Reading from the N-terminus, the 179-residue chain is Casparian strip membrane protein 1 (179 aa).

The Cytoplasmic portion of the chain corresponds to 1–17 (MKAGPLQLGVVPPANRA). A helical membrane pass occupies residues 18 to 38 (IAILDFFLRPIAIVGTLASAI). Residues 39–67 (AMATTNQTLPFFSQFIRFRAKFNDLPSFT) are Extracellular-facing. Asn44 is a glycosylation site (N-linked (GlcNAc...) asparagine). A helical transmembrane segment spans residues 68–88 (FFVVASSIVSAYLILSLGFSI). Topologically, residues 89 to 100 (LHIAKSNLVNSR) are cytoplasmic. The helical transmembrane segment at 101–121 (VLLLLLDTAAMGLLMAGSAAA) threads the bilayer. Residues 122–154 (TAIVQLAHKGNNKVNWFAICQQYNSFCKRVSGS) lie on the Extracellular side of the membrane. Residues 155-175 (LIGSYAGVVVLILLILLSGVA) form a helical membrane-spanning segment. Over 176–179 (LSRR) the chain is Cytoplasmic.

The protein belongs to the Casparian strip membrane proteins (CASP) family. As to quaternary structure, homodimer and heterodimers.

It localises to the cell membrane. Functionally, regulates membrane-cell wall junctions and localized cell wall deposition. Required for establishment of the Casparian strip membrane domain (CSD) and the subsequent formation of Casparian strips, a cell wall modification of the root endodermis that determines an apoplastic barrier between the intraorganismal apoplasm and the extraorganismal apoplasm and prevents lateral diffusion. This chain is Casparian strip membrane protein 1, found in Lactuca sativa (Garden lettuce).